A 144-amino-acid polypeptide reads, in one-letter code: Large ribosomal subunit protein uL15 (144 aa).

The segment at 1–53 (MRLNTLSPAEGAKHAPKRVGRGIGSGLGKTGGRGHKGQKSRSGGGVRRGFEGG) is disordered. The segment covering 21–31 (RGIGSGLGKTG) has biased composition (gly residues).

The protein belongs to the universal ribosomal protein uL15 family. Part of the 50S ribosomal subunit.

Functionally, binds to the 23S rRNA. The chain is Large ribosomal subunit protein uL15 from Proteus mirabilis (strain HI4320).